The chain runs to 453 residues: Cytochrome b-c1 complex subunit 2, mitochondrial (453 aa).

The N-terminal 14 residues, 1 to 14 (MKLLSRAGSFSRFY), are a transit peptide targeting the mitochondrion. An N6-acetyllysine mark is found at lysine 66, lysine 199, and lysine 250. At serine 368 the chain carries Phosphoserine.

This sequence belongs to the peptidase M16 family. UQCRC2/QCR2 subfamily. In terms of assembly, component of the ubiquinol-cytochrome c oxidoreductase (cytochrome b-c1 complex, complex III, CIII), a multisubunit enzyme composed of 11 subunits. The complex is composed of 3 respiratory subunits cytochrome b, cytochrome c1 and Rieske protein UQCRFS1, 2 core protein subunits UQCRC1/QCR1 and UQCRC2/QCR2, and 6 low-molecular weight protein subunits UQCRH/QCR6, UQCRB/QCR7, UQCRQ/QCR8, UQCR10/QCR9, UQCR11/QCR10 and subunit 9, the cleavage product of Rieske protein UQCRFS1. The complex exists as an obligatory dimer and forms supercomplexes (SCs) in the inner mitochondrial membrane with NADH-ubiquinone oxidoreductase (complex I, CI) and cytochrome c oxidase (complex IV, CIV), resulting in different assemblies (supercomplex SCI(1)III(2)IV(1) and megacomplex MCI(2)III(2)IV(2)). Interacts with RAB5IF. Interacts with STMP1. In terms of processing, acetylation of Lys-159 and Lys-250 is observed in liver mitochondria from fasted mice but not from fed mice. In terms of tissue distribution, expressed in neurons and astrocytes of the cerebral cortex and hippocampus (at protein level).

The protein localises to the mitochondrion inner membrane. Component of the ubiquinol-cytochrome c oxidoreductase, a multisubunit transmembrane complex that is part of the mitochondrial electron transport chain which drives oxidative phosphorylation. The respiratory chain contains 3 multisubunit complexes succinate dehydrogenase (complex II, CII), ubiquinol-cytochrome c oxidoreductase (cytochrome b-c1 complex, complex III, CIII) and cytochrome c oxidase (complex IV, CIV), that cooperate to transfer electrons derived from NADH and succinate to molecular oxygen, creating an electrochemical gradient over the inner membrane that drives transmembrane transport and the ATP synthase. The cytochrome b-c1 complex catalyzes electron transfer from ubiquinol to cytochrome c, linking this redox reaction to translocation of protons across the mitochondrial inner membrane, with protons being carried across the membrane as hydrogens on the quinol. In the process called Q cycle, 2 protons are consumed from the matrix, 4 protons are released into the intermembrane space and 2 electrons are passed to cytochrome c. The 2 core subunits UQCRC1/QCR1 and UQCRC2/QCR2 are homologous to the 2 mitochondrial-processing peptidase (MPP) subunits beta-MPP and alpha-MPP respectively, and they seem to have preserved their MPP processing properties. May be involved in the in situ processing of UQCRFS1 into the mature Rieske protein and its mitochondrial targeting sequence (MTS)/subunit 9 when incorporated into complex III. This is Cytochrome b-c1 complex subunit 2, mitochondrial (Uqcrc2) from Mus musculus (Mouse).